Here is a 410-residue protein sequence, read N- to C-terminus: MAGLAPEGSQFDDKQYDKKMQEILTEDFFTSYDDVCESFDSMGLQENLLRGIYAYGFEKPSAIQQRGIVPFCKGLDVIQQAQSGTGKTATFCSGILQQLDYGLVECQALVLAPTRELAQQIEKVMRALGDYLGVKVHACVGGTSVREDQRILASGVHVVVGTPGRVFDMLRRQSLRPDNIKMFVLDEADEMLSRGFKDQIYDIFQLLPSKIQVGVFSATMPPEALEITRKFMNKPVRILVKRDELTLEGIKQFYVNIDKEDWKLDTLCDLYETLAITQSVIFVNTRRKVDWLTDKMRSRDHTVSATHGDMDQNTRDIIMREFRSGSSRVLITTDLLARGIDVQQVSLVINYDLPTQPENYLHRIGRSGRFGRKGVAINFVTRDDERIVFDVQRFYNVTVEELPANVADLL.

The short motif at 37 to 65 is the Q motif element; the sequence is ESFDSMGLQENLLRGIYAYGFEKPSAIQQ. Positions 68–238 constitute a Helicase ATP-binding domain; the sequence is IVPFCKGLDV…RKFMNKPVRI (171 aa). 81 to 88 contributes to the ATP binding site; it reads AQSGTGKT. A DEAD box motif is present at residues 186-189; sequence DEAD. Residues 249–410 form the Helicase C-terminal domain; sequence GIKQFYVNID…ELPANVADLL (162 aa).

This sequence belongs to the DEAD box helicase family. eIF4A subfamily. EIF4F is a multi-subunit complex, the composition of which varies with external and internal environmental conditions. It is composed of at least EIF4A, EIF4E and EIF4G.

The catalysed reaction is ATP + H2O = ADP + phosphate + H(+). Its function is as follows. ATP-dependent RNA helicase which is a subunit of the eIF4F complex involved in cap recognition and is required for mRNA binding to ribosome. In the current model of translation initiation, eIF4A unwinds RNA secondary structures in the 5'-UTR of mRNAs which is necessary to allow efficient binding of the small ribosomal subunit, and subsequent scanning for the initiator codon. In Zea mays (Maize), this protein is Eukaryotic initiation factor 4A.